The primary structure comprises 636 residues: MTAATPARRPIRPLPDQLISQIAAGEVVERPASVVKELLENALDAGATQLQIKLEEGGVRRIAITDNGGGIPVDELPVALMRHATSKIGSLEELESVATLGFRGEALASIASVAELTLTSRTAQDAHATQIIAQTGRVQPASGGVGTTVDVQHLYFNTPARRKFLKTEQTELGHCLEVIRRTALARPDVAISVHHNGKPLEHWNAAQADMRTAAVLGTEFARARLPFEEAAGELRLFGFAGLPTASRGRADHQFFYVNGRFVRDRLLTHAVRSAYEDVLHGDRFPAYVLCLELPPEAVDVNVHPSKIEVRFRDSRAVHQFVYHAVQRALSRHAGEQGDSLRTDIADAPEQPGATATPADNTTRWVNQMAARQTSLGIAQPRAEYLAMMRGGSAPQPSSRPAWMADVPSAATLFDGAASAPADAAPAQASEPAAAPQADDSDDAHPLGFAVAQLHGIYVLAQNARGMVLVDMHAAHERILYEQLKTALEARRIEVQPLLIPVTFAASPVEIGTAEEFGDTLDLLGFDISAVSPTTLAVRAVPTLLQKADAQALARDVLRDLQAYGGSRVLAERQNELLATLACHSAVRANRRLNLDEMNALLRQMEATERADQCNHGRPTWIQLTVADLDRLFLRGQ.

Positions 332-344 (HAGEQGDSLRTDI) are enriched in basic and acidic residues. 2 disordered regions span residues 332–360 (HAGE…PADN) and 417–443 (ASAP…SDDA). A compositionally biased stretch (low complexity) spans 417 to 437 (ASAPADAAPAQASEPAAAPQA).

It belongs to the DNA mismatch repair MutL/HexB family.

Its function is as follows. This protein is involved in the repair of mismatches in DNA. It is required for dam-dependent methyl-directed DNA mismatch repair. May act as a 'molecular matchmaker', a protein that promotes the formation of a stable complex between two or more DNA-binding proteins in an ATP-dependent manner without itself being part of a final effector complex. This chain is DNA mismatch repair protein MutL, found in Ralstonia nicotianae (strain ATCC BAA-1114 / GMI1000) (Ralstonia solanacearum).